Here is a 357-residue protein sequence, read N- to C-terminus: Holliday junction branch migration complex subunit RuvB (357 aa).

The large ATPase domain (RuvB-L) stretch occupies residues 4-195 (TDKLAAKAVS…FGIVARLEFY (192 aa)). ATP is bound by residues L34, R35, G76, K79, T80, T81, 142–144 (EDY), R185, Y195, and R232. T80 is a Mg(2+) binding site. The small ATPAse domain (RuvB-S) stretch occupies residues 196 to 266 (TPTELARIVT…VADAALAMLD (71 aa)). Residues 269–357 (AVGFDLMDRK…PARDLWDNNA (89 aa)) form a head domain (RuvB-H) region. Positions 305, 324, and 329 each coordinate DNA.

It belongs to the RuvB family. As to quaternary structure, homohexamer. Forms an RuvA(8)-RuvB(12)-Holliday junction (HJ) complex. HJ DNA is sandwiched between 2 RuvA tetramers; dsDNA enters through RuvA and exits via RuvB. An RuvB hexamer assembles on each DNA strand where it exits the tetramer. Each RuvB hexamer is contacted by two RuvA subunits (via domain III) on 2 adjacent RuvB subunits; this complex drives branch migration. In the full resolvosome a probable DNA-RuvA(4)-RuvB(12)-RuvC(2) complex forms which resolves the HJ.

The protein localises to the cytoplasm. It carries out the reaction ATP + H2O = ADP + phosphate + H(+). In terms of biological role, the RuvA-RuvB-RuvC complex processes Holliday junction (HJ) DNA during genetic recombination and DNA repair, while the RuvA-RuvB complex plays an important role in the rescue of blocked DNA replication forks via replication fork reversal (RFR). RuvA specifically binds to HJ cruciform DNA, conferring on it an open structure. The RuvB hexamer acts as an ATP-dependent pump, pulling dsDNA into and through the RuvAB complex. RuvB forms 2 homohexamers on either side of HJ DNA bound by 1 or 2 RuvA tetramers; 4 subunits per hexamer contact DNA at a time. Coordinated motions by a converter formed by DNA-disengaged RuvB subunits stimulates ATP hydrolysis and nucleotide exchange. Immobilization of the converter enables RuvB to convert the ATP-contained energy into a lever motion, pulling 2 nucleotides of DNA out of the RuvA tetramer per ATP hydrolyzed, thus driving DNA branch migration. The RuvB motors rotate together with the DNA substrate, which together with the progressing nucleotide cycle form the mechanistic basis for DNA recombination by continuous HJ branch migration. Branch migration allows RuvC to scan DNA until it finds its consensus sequence, where it cleaves and resolves cruciform DNA. In Ralstonia nicotianae (strain ATCC BAA-1114 / GMI1000) (Ralstonia solanacearum), this protein is Holliday junction branch migration complex subunit RuvB.